The following is a 101-amino-acid chain: Protein RADIALIS-like 2 (101 aa).

The SANT domain occupies 9 to 64 (YGSGSWTVKQNKAFERALAVYDQDTPDRWHNVARAVGGKTPEEAKRQYDLLVRDIE). Residues 69–101 (GHVPFPDYKTTTGNSNRGRLRDEEKRMRSMKLQ) are disordered.

As to expression, expressed in the funiculus of ovules and in embryos. In young ovules, expression is observed in the adaxial side of the funiculus (the stalk connecting the embryo sac to the placenta). Also expressed in heart-stage embryos, in the cortex and endodermis of the hypocotyl region but not in the cotyledons, shoot and root apical meristems, provasculature or epidermis. Not detected in young seedlings, mature roots or in young floral primordia.

The protein resides in the nucleus. Functionally, probable transcription factor. Required for female gametophyte development. In Arabidopsis thaliana (Mouse-ear cress), this protein is Protein RADIALIS-like 2 (RL2).